We begin with the raw amino-acid sequence, 359 residues long: Fructose-bisphosphate aldolase class 2 (359 aa).

S61 is a binding site for D-glyceraldehyde 3-phosphate. Residue D110 is the Proton donor of the active site. Residues H111, D145, E175, and H227 each coordinate Zn(2+). G228 is a dihydroxyacetone phosphate binding site. Residue H265 participates in Zn(2+) binding. Dihydroxyacetone phosphate contacts are provided by residues 266–268 (GGS) and 287–290 (NIDT).

Belongs to the class II fructose-bisphosphate aldolase family. Zn(2+) is required as a cofactor.

It carries out the reaction beta-D-fructose 1,6-bisphosphate = D-glyceraldehyde 3-phosphate + dihydroxyacetone phosphate. The protein operates within carbohydrate degradation; glycolysis; D-glyceraldehyde 3-phosphate and glycerone phosphate from D-glucose: step 4/4. In terms of biological role, catalyzes the aldol condensation of dihydroxyacetone phosphate (DHAP or glycerone-phosphate) with glyceraldehyde 3-phosphate (G3P) to form fructose 1,6-bisphosphate (FBP) in gluconeogenesis and the reverse reaction in glycolysis. In Buchnera aphidicola subsp. Schizaphis graminum (strain Sg), this protein is Fructose-bisphosphate aldolase class 2 (fbaA).